The chain runs to 393 residues: Probable protein phosphatase 2C 68 (393 aa).

The 304-residue stretch at 56–359 (DFSIAVVQAN…DDITVVVIFI (304 aa)) folds into the PPM-type phosphatase domain. 4 residues coordinate Mn(2+): D87, G88, D291, and D350.

The protein belongs to the PP2C family. The cofactor is Mg(2+). Mn(2+) is required as a cofactor.

It catalyses the reaction O-phospho-L-seryl-[protein] + H2O = L-seryl-[protein] + phosphate. The enzyme catalyses O-phospho-L-threonyl-[protein] + H2O = L-threonyl-[protein] + phosphate. Its function is as follows. May dephosphorylate and repress plasma membrane H(+)-ATPases (PM H(+)-ATPases, e.g. AHA1 and AHA2), thus influencing negatively plant growth and fitness. This chain is Probable protein phosphatase 2C 68, found in Arabidopsis thaliana (Mouse-ear cress).